Here is a 217-residue protein sequence, read N- to C-terminus: UPF0319 protein VP1009 (217 aa).

The first 21 residues, 1–21 (MRLKTWIVAFFLGLFGTTVNA), serve as a signal peptide directing secretion.

This sequence belongs to the UPF0319 family.

This Vibrio parahaemolyticus serotype O3:K6 (strain RIMD 2210633) protein is UPF0319 protein VP1009.